Reading from the N-terminus, the 804-residue chain is Probable exo-1,4-beta-xylosidase xlnD (804 aa).

Residues 1 to 17 (MAVAALALLALLPQALG) form the signal peptide. Residues Asn-20, Asn-115, Asn-139, Asn-234, and Asn-243 are each glycosylated (N-linked (GlcNAc...) asparagine). Residue Asp-307 is part of the active site. 12 N-linked (GlcNAc...) asparagine glycosylation sites follow: Asn-349, Asn-382, Asn-404, Asn-433, Asn-444, Asn-485, Asn-489, Asn-621, Asn-652, Asn-666, Asn-688, and Asn-710.

This sequence belongs to the glycosyl hydrolase 3 family.

The protein localises to the secreted. The enzyme catalyses Hydrolysis of (1-&gt;4)-beta-D-xylans, to remove successive D-xylose residues from the non-reducing termini.. Its pathway is glycan degradation; xylan degradation. Functionally, xylan 1,4-beta-xylosidase involved in the hydrolysis of xylan, a major structural heterogeneous polysaccharide found in plant biomass representing the second most abundant polysaccharide in the biosphere, after cellulose. In Aspergillus japonicus, this protein is Probable exo-1,4-beta-xylosidase xlnD (xlnD).